We begin with the raw amino-acid sequence, 412 residues long: Diphosphomevalonate decarboxylase MVD1, peroxisomal (412 aa).

Residue 23 to 26 participates in (R)-5-diphosphomevalonate binding; sequence YWGK. The Peroxisomal targeting signal PTS2 motif lies at 40–48; that stretch reads SVTLDPDHL. (R)-5-diphosphomevalonate contacts are provided by residues Arg-78, 161–166, and Thr-217; that span reads SGSACR.

Belongs to the diphosphomevalonate decarboxylase family. In terms of assembly, homodimer.

It localises to the peroxisome. It catalyses the reaction (R)-5-diphosphomevalonate + ATP = isopentenyl diphosphate + ADP + phosphate + CO2. The protein operates within isoprenoid biosynthesis; isopentenyl diphosphate biosynthesis via mevalonate pathway; isopentenyl diphosphate from (R)-mevalonate: step 3/3. In terms of biological role, performs the first committed step in the biosynthesis of isoprene-containing compounds such as sterols and terpenoids. Is specific for (R)-5-diphosphomevalonate (MVAPP). The catalytic efficiency with (R)-5-phosphomevalonate (MVAP) as substrate is 10000-fold lower than for MVAPP. Can complement a yeast mutant defective in MVD activity. The protein is Diphosphomevalonate decarboxylase MVD1, peroxisomal of Arabidopsis thaliana (Mouse-ear cress).